The following is a 283-amino-acid chain: Protein FdhE homolog (283 aa).

The protein belongs to the FdhE family.

It is found in the cytoplasm. In terms of biological role, necessary for formate dehydrogenase activity. This is Protein FdhE homolog from Aquifex aeolicus (strain VF5).